A 402-amino-acid polypeptide reads, in one-letter code: S-adenosylmethionine synthase (402 aa).

Position 137-142 (137-142 (GQGSAD)) interacts with ATP.

The protein belongs to the AdoMet synthase 2 family. Mg(2+) serves as cofactor.

The catalysed reaction is L-methionine + ATP + H2O = S-adenosyl-L-methionine + phosphate + diphosphate. Its pathway is amino-acid biosynthesis; S-adenosyl-L-methionine biosynthesis; S-adenosyl-L-methionine from L-methionine: step 1/1. Its function is as follows. Catalyzes the formation of S-adenosylmethionine from methionine and ATP. In Pyrobaculum neutrophilum (strain DSM 2338 / JCM 9278 / NBRC 100436 / V24Sta) (Thermoproteus neutrophilus), this protein is S-adenosylmethionine synthase.